The following is a 152-amino-acid chain: Nucleoside diphosphate kinase (152 aa).

Residues K11, F59, R87, T93, R104, and N114 each contribute to the ATP site. H117 acts as the Pros-phosphohistidine intermediate in catalysis.

This sequence belongs to the NDK family. As to quaternary structure, homotetramer. Mg(2+) serves as cofactor.

It localises to the cytoplasm. The catalysed reaction is dZDP + ATP = dZTP + ADP. It catalyses the reaction a 2'-deoxyribonucleoside 5'-diphosphate + ATP = a 2'-deoxyribonucleoside 5'-triphosphate + ADP. It carries out the reaction a ribonucleoside 5'-diphosphate + ATP = a ribonucleoside 5'-triphosphate + ADP. The protein operates within purine metabolism. In terms of biological role, major role in the synthesis of nucleoside triphosphates other than ATP. The ATP gamma phosphate is transferred to the NDP beta phosphate via a ping-pong mechanism, using a phosphorylated active-site intermediate. Its function is as follows. (Microbial infection) Catalyzes the phosphorylation of dZDP to dZTP, when the bacterium is infected by a phage that produces the substrate for the synthesis of dZTP (2- amino-2'-deoxyadenosine 5'-triphosphate), which is then used by the phage as a DNA polymerase substrate. This Synechococcus sp. (strain WH7803) protein is Nucleoside diphosphate kinase.